The following is a 135-amino-acid chain: Probable transcription factor At2g20613 (135 aa).

Residues 1 to 104 (MSHKRFNPLT…KRGGGGGEEA (104 aa)) are disordered. The segment covering 28–41 (DSSSDEETDSDSDS) has biased composition (acidic residues). Basic and acidic residues predominate over residues 62–80 (KSVKISEKSVAKRSRETHE).

This sequence belongs to the GeBP family.

In Arabidopsis thaliana (Mouse-ear cress), this protein is Probable transcription factor At2g20613.